Here is a 549-residue protein sequence, read N- to C-terminus: CTP synthase (549 aa).

An amidoligase domain region spans residues 1–266 (MSAKYIFVTG…DKLALRYLHL (266 aa)). Ser-14 serves as a coordination point for CTP. Ser-14 is a binding site for UTP. ATP contacts are provided by residues 15 to 20 (SLGKGL) and Asp-72. Mg(2+) is bound by residues Asp-72 and Glu-140. CTP is bound by residues 147–149 (DIE), 187–192 (KTKPTQ), and Lys-223. UTP contacts are provided by residues 187-192 (KTKPTQ) and Lys-223. 239–241 (KDV) serves as a coordination point for ATP. In terms of domain architecture, Glutamine amidotransferase type-1 spans 291-533 (SIGIVGKYVE…VKAAYQNHKP (243 aa)). Gly-353 is an L-glutamine binding site. The active-site Nucleophile; for glutamine hydrolysis is Cys-380. L-glutamine-binding positions include 381 to 384 (LGMQ), Glu-404, and Arg-461. Catalysis depends on residues His-506 and Glu-508.

This sequence belongs to the CTP synthase family. As to quaternary structure, homotetramer.

The enzyme catalyses UTP + L-glutamine + ATP + H2O = CTP + L-glutamate + ADP + phosphate + 2 H(+). It carries out the reaction L-glutamine + H2O = L-glutamate + NH4(+). It catalyses the reaction UTP + NH4(+) + ATP = CTP + ADP + phosphate + 2 H(+). Its pathway is pyrimidine metabolism; CTP biosynthesis via de novo pathway; CTP from UDP: step 2/2. Its activity is regulated as follows. Allosterically activated by GTP, when glutamine is the substrate; GTP has no effect on the reaction when ammonia is the substrate. The allosteric effector GTP functions by stabilizing the protein conformation that binds the tetrahedral intermediate(s) formed during glutamine hydrolysis. Inhibited by the product CTP, via allosteric rather than competitive inhibition. Catalyzes the ATP-dependent amination of UTP to CTP with either L-glutamine or ammonia as the source of nitrogen. Regulates intracellular CTP levels through interactions with the four ribonucleotide triphosphates. This Acidobacterium capsulatum (strain ATCC 51196 / DSM 11244 / BCRC 80197 / JCM 7670 / NBRC 15755 / NCIMB 13165 / 161) protein is CTP synthase.